The primary structure comprises 150 residues: Protein Turandot X (150 aa).

The N-terminal stretch at 1 to 22 (MGLHIGSLLICVFLGILPFATA) is a signal peptide. Positions 127-150 (REEGQSNHANSPTTLPSRIQKMTK) are disordered. Positions 132–150 (SNHANSPTTLPSRIQKMTK) are enriched in polar residues.

This sequence belongs to the Turandot family.

The protein localises to the secreted. Functionally, a humoral factor that may play a role in stress tolerance. This chain is Protein Turandot X, found in Drosophila simulans (Fruit fly).